A 439-amino-acid chain; its full sequence is Casein kinase I homolog 3 (439 aa).

The 272-residue stretch at 15 to 286 folds into the Protein kinase domain; it reads YRVGKKIGEG…LRSLFDSLLL (272 aa). Residues 21–29 and K44 each bind ATP; that span reads IGEGSFGML. D134 (proton acceptor) is an active-site residue. Residues 366 to 426 form a disordered region; sequence DGIPGKAASP…PSKEKSRKKF (61 aa). The segment covering 372-413 has biased composition (low complexity); that stretch reads AASPQVQQQQQTSSAQQQQPQRVEQPAPQTTQPTQVDTQQAA.

This sequence belongs to the protein kinase superfamily. CK1 Ser/Thr protein kinase family. Casein kinase I subfamily.

It localises to the cytoplasm. The catalysed reaction is L-seryl-[protein] + ATP = O-phospho-L-seryl-[protein] + ADP + H(+). It carries out the reaction L-threonyl-[protein] + ATP = O-phospho-L-threonyl-[protein] + ADP + H(+). Its function is as follows. Casein kinases are operationally defined by their preferential utilization of acidic proteins such as caseins as substrates. The sequence is that of Casein kinase I homolog 3 (cki3) from Schizosaccharomyces pombe (strain 972 / ATCC 24843) (Fission yeast).